A 178-amino-acid polypeptide reads, in one-letter code: MSIDSLKGQLPDFAKDVRLNLGSIANDDSLKEQTKYGLLLACALASRNAEVAAAFDREAASHLTPEARDAARAAATIMGMNNVYYRFVHLASNPVYKTMPAKLRMGVIGSPGVPKTDFELWCLAVSAINGCGMCIDAHEKVLADAGVTQEVIQTAVRFAAIVQSAAIALEAAQLPAFA.

C131 (proton donor) is an active-site residue. C131 and C134 form a disulfide bridge. The Cysteine sulfenic acid (-SOH) intermediate role is filled by C134.

The protein belongs to the AhpD family.

The enzyme catalyses N(6)-[(R)-dihydrolipoyl]-L-lysyl-[lipoyl-carrier protein] + a hydroperoxide = N(6)-[(R)-lipoyl]-L-lysyl-[lipoyl-carrier protein] + an alcohol + H2O. Its function is as follows. Antioxidant protein with alkyl hydroperoxidase activity. Required for the reduction of the AhpC active site cysteine residues and for the regeneration of the AhpC enzyme activity. This chain is Alkyl hydroperoxide reductase AhpD, found in Methylocella silvestris (strain DSM 15510 / CIP 108128 / LMG 27833 / NCIMB 13906 / BL2).